The following is a 292-amino-acid chain: MERGPVVGAGRGAGARIRALLGGLVRVLLWVASALLYFGSEQAARLLGSPCLRRLYHAWLAAVVIFGPLLQFHVNPRTIFASHGNFFNIKFVNSAWGWTCTFLGGFVLLVVFLATRRVAVTARHLSRLVVGAAVWRGAGRAFLLIEDLTGSCFEPLPQGLLLHELPDRRSCLAAGHQWRGYTVSSHTFLLTFCCLLMAEEAAVFAKYLAHGLPAGAPLRLVFLLNVLLLGLWNFLLLCTVIYFHQYTHKVVGAAVGTFAWYLTYGSWYHQPWSPGSPGHGLFPRPHSIHKHN.

The Lumenal segment spans residues 1–18 (MERGPVVGAGRGAGARIR). The helical transmembrane segment at 19–39 (ALLGGLVRVLLWVASALLYFG) threads the bilayer. At 40–54 (SEQAARLLGSPCLRR) the chain is on the cytoplasmic side. The chain crosses the membrane as a helical span at residues 55–75 (LYHAWLAAVVIFGPLLQFHVN). Residues 76 to 94 (PRTIFASHGNFFNIKFVNS) are Lumenal-facing. Residues 95-115 (AWGWTCTFLGGFVLLVVFLAT) form a helical membrane-spanning segment. The Cytoplasmic segment spans residues 116–141 (RRVAVTARHLSRLVVGAAVWRGAGRA). The helical transmembrane segment at 142-162 (FLLIEDLTGSCFEPLPQGLLL) threads the bilayer. Over 163–187 (HELPDRRSCLAAGHQWRGYTVSSHT) the chain is Lumenal. His186 is an active-site residue. The chain crosses the membrane as a helical span at residues 188 to 208 (FLLTFCCLLMAEEAAVFAKYL). Residues 209–220 (AHGLPAGAPLRL) are Cytoplasmic-facing. The helical transmembrane segment at 221-241 (VFLLNVLLLGLWNFLLLCTVI) threads the bilayer. At 242 to 249 (YFHQYTHK) the chain is on the lumenal side. His244 is a catalytic residue. The helical transmembrane segment at 250–270 (VVGAAVGTFAWYLTYGSWYHQ) threads the bilayer. Residues 271–292 (PWSPGSPGHGLFPRPHSIHKHN) are Cytoplasmic-facing.

The protein belongs to the FIT family. FIT1 subfamily.

Its subcellular location is the endoplasmic reticulum membrane. Plays an important role in the formation of lipid droplets (LDs) which are storage organelles at the center of lipid and energy homeostasis. Directly binds to diacylglycerol (DAGs) and triacylglycerol. This is Fat storage-inducing transmembrane protein 1 from Bos taurus (Bovine).